We begin with the raw amino-acid sequence, 37 residues long: U1-theraphotoxin-Hs1b (37 aa).

3 cysteine pairs are disulfide-bonded: cysteine 4–cysteine 18, cysteine 8–cysteine 29, and cysteine 23–cysteine 34.

Form 1 and form 2 may dimerize. Expressed by the venom gland.

It localises to the secreted. Its function is as follows. Lethal neurotoxin that blocks neuromuscular transmission. Acts cooperatively to potentiate the activity of huwentoxin-I. This chain is U1-theraphotoxin-Hs1b, found in Cyriopagopus schmidti (Chinese bird spider).